The following is a 76-amino-acid chain: Esculentin-2CG1 (76 aa).

Positions Met1–Cys22 are cleaved as a signal peptide. Positions Glu23–Val37 are cleaved as a propeptide — removed in mature form. Cys70 and Cys76 are oxidised to a cystine.

As to expression, expressed by the skin glands.

Its subcellular location is the secreted. Functionally, antimicrobial peptide active against a variety of Gram-positive and some Gram-negative bacterial strains. Has antifungal activity against a slime mold isolate. Has hemolytic activity against human erythrocytes. This is Esculentin-2CG1 from Amolops chunganensis (Chungan torrent frog).